Here is a 311-residue protein sequence, read N- to C-terminus: Pyrimidine-specific ribonucleoside hydrolase RihA (311 aa).

The active site involves His-240.

Belongs to the IUNH family. RihA subfamily.

Its function is as follows. Hydrolyzes cytidine or uridine to ribose and cytosine or uracil, respectively. This Salmonella schwarzengrund (strain CVM19633) protein is Pyrimidine-specific ribonucleoside hydrolase RihA.